A 33-amino-acid chain; its full sequence is Pardaxin P-5 (33 aa).

It belongs to the pardaxin family. As to quaternary structure, monomer. In aqueous solution exists as a tetramer.

Its subcellular location is the secreted. It is found in the target cell membrane. Functionally, exhibits unusual shark repellent and surfactant properties. Forms voltage-dependent, ion-permeable channels in membranes. At high concentration causes cell membrane lysis. In Pardachirus marmoratus (Finless sole), this protein is Pardaxin P-5.